A 319-amino-acid polypeptide reads, in one-letter code: L-lactate dehydrogenase 2 (319 aa).

Residues Val-16, Asp-37, Lys-42, Tyr-68, and 82 to 83 (GA) each bind NAD(+). Residues Gln-85 and Arg-91 each coordinate substrate. Residues Ser-104, 121–123 (AAN), and Ser-146 each bind NAD(+). 123 to 126 (NPVD) is a substrate binding site. 151 to 154 (DSAR) serves as a coordination point for substrate. Catalysis depends on His-178, which acts as the Proton acceptor. Tyr-222 bears the Phosphotyrosine mark. Thr-231 provides a ligand contact to substrate.

It belongs to the LDH/MDH superfamily. LDH family. Homotetramer.

It localises to the cytoplasm. The catalysed reaction is (S)-lactate + NAD(+) = pyruvate + NADH + H(+). The protein operates within fermentation; pyruvate fermentation to lactate; (S)-lactate from pyruvate: step 1/1. In terms of biological role, catalyzes the conversion of lactate to pyruvate (Potential). Contributes to S.aureus growth during nitrosative stress in both aerobically and anaerobically cultured cells, despite playing a secondary role in this resistance mechanism. In Staphylococcus aureus (strain USA300), this protein is L-lactate dehydrogenase 2.